The sequence spans 482 residues: MRYRPVIGLEIHVQLSTKTKAFCSCPADVFELPPNTAICPVCTGQPGALPVPNEEMIRFAVKTALALNCKIHKYSRFDRKNYFYPDLPKGYQISQYFYPIATEGFLEIDGDEGKKKVRIRRLHLEEDAGKLVHEGDSITRASYSLVDMNRCGVPLIEIVTEPDISSPREARVFMEKLRSIVRYLGVSTGDMEKGALRCDANISVVDTETGRQSNRVEVKNMNSFRFVEKALEYEFERIVKAMERGEDVERETRGWDMTTKTTVSMRGKEEESDYRYFPEPDIPPVVLSDEYLEEVKKELPELPDEKAKRFMREYDLPEYDAKVLTSSKELAEFFEECVKVVNRPKDLSNWIMTEVLRELNERNIEITESKLTPQHFADLFKLMDEGKISIKIAKEIFPEVFETGKMPSQIVEEKGLVQISDEKLIEELVKKAMEQNPKAVQDYKSGKKKAAGFFVGYVMRETKGKANPELTNRIIQKLLEGE.

It belongs to the GatB/GatE family. GatB subfamily. As to quaternary structure, heterotrimer of A, B and C subunits.

The enzyme catalyses L-glutamyl-tRNA(Gln) + L-glutamine + ATP + H2O = L-glutaminyl-tRNA(Gln) + L-glutamate + ADP + phosphate + H(+). It carries out the reaction L-aspartyl-tRNA(Asn) + L-glutamine + ATP + H2O = L-asparaginyl-tRNA(Asn) + L-glutamate + ADP + phosphate + 2 H(+). Allows the formation of correctly charged Asn-tRNA(Asn) or Gln-tRNA(Gln) through the transamidation of misacylated Asp-tRNA(Asn) or Glu-tRNA(Gln) in organisms which lack either or both of asparaginyl-tRNA or glutaminyl-tRNA synthetases. The reaction takes place in the presence of glutamine and ATP through an activated phospho-Asp-tRNA(Asn) or phospho-Glu-tRNA(Gln). This Thermotoga sp. (strain RQ2) protein is Aspartyl/glutamyl-tRNA(Asn/Gln) amidotransferase subunit B.